The sequence spans 100 residues: Phosphoribosylformylglycinamidine synthase subunit PurS (100 aa).

Belongs to the PurS family. As to quaternary structure, homodimer. Part of the FGAM synthase complex composed of 1 PurL, 1 PurQ and 2 PurS subunits.

It is found in the cytoplasm. The catalysed reaction is N(2)-formyl-N(1)-(5-phospho-beta-D-ribosyl)glycinamide + L-glutamine + ATP + H2O = 2-formamido-N(1)-(5-O-phospho-beta-D-ribosyl)acetamidine + L-glutamate + ADP + phosphate + H(+). Its pathway is purine metabolism; IMP biosynthesis via de novo pathway; 5-amino-1-(5-phospho-D-ribosyl)imidazole from N(2)-formyl-N(1)-(5-phospho-D-ribosyl)glycinamide: step 1/2. Its function is as follows. Part of the phosphoribosylformylglycinamidine synthase complex involved in the purines biosynthetic pathway. Catalyzes the ATP-dependent conversion of formylglycinamide ribonucleotide (FGAR) and glutamine to yield formylglycinamidine ribonucleotide (FGAM) and glutamate. The FGAM synthase complex is composed of three subunits. PurQ produces an ammonia molecule by converting glutamine to glutamate. PurL transfers the ammonia molecule to FGAR to form FGAM in an ATP-dependent manner. PurS interacts with PurQ and PurL and is thought to assist in the transfer of the ammonia molecule from PurQ to PurL. The protein is Phosphoribosylformylglycinamidine synthase subunit PurS of Synechocystis sp. (strain ATCC 27184 / PCC 6803 / Kazusa).